The following is a 448-amino-acid chain: Pre-mRNA-splicing factor SAD1 (448 aa).

An N-acetylmethionine modification is found at methionine 1. The UBP-type; degenerate zinc-finger motif lies at 27 to 124 (PNYAYLETVV…NSIKFAAYPT (98 aa)). Zn(2+)-binding residues include cysteine 60, cysteine 63, histidine 79, and histidine 85. The 298-residue stretch at 150-447 (IGFTNAATYD…ETFIQVWEKQ (298 aa)) folds into the USP domain.

Component of the 45S U1.U2.U4/U6.U5 penta-snRNP particle, a subcomplex of the spliceosome.

The protein localises to the nucleus. Its function is as follows. Promotes the assembly of newly synthesized U4 snRNA into the U4/U6 snRNP particle. Required for splicing of pre-mRNA. This is Pre-mRNA-splicing factor SAD1 (SAD1) from Saccharomyces cerevisiae (strain ATCC 204508 / S288c) (Baker's yeast).